The primary structure comprises 792 residues: Genome polyprotein (792 aa).

Residues 1–15 (MNNQRKKTGNPSFNM) form an interaction with host EXOC1 region. Residues 1 to 101 (MNNQRKKTGN…LNIMNRRRRS (101 aa)) lie on the Cytoplasmic side of the membrane. A hydrophobic; homodimerization of capsid protein C region spans residues 37-72 (LLSGQGPMKLVMAFVAFLRFLAIPPTAGILKRWGSF). A propeptide spans 101–114 (SVTMILMLLPTALA) (ER anchor for the capsid protein C, removed in mature form by serine protease NS3). A helical transmembrane segment spans residues 102–119 (VTMILMLLPTALAFHLTT). At 120-242 (RGGEPTLIVS…QIQKVETWAL (123 aa)) the chain is on the extracellular side. Asn-183 carries an N-linked (GlcNAc...) asparagine; by host glycan. Residues 243–260 (RHPGFTVIGLFLAHAIGT) form a helical membrane-spanning segment. Residue Ser-261 is a topological domain, cytoplasmic. A helical transmembrane segment spans residues 262-280 (ITQKGIIFILLMLVTPSMA). Over 281–725 (MRCVGIGNRD…IHQIFGTAYG (445 aa)) the chain is Extracellular. Cystine bridges form between Cys-283-Cys-310, Cys-340-Cys-401, Cys-354-Cys-385, and Cys-372-Cys-396. Asn-347 carries N-linked (GlcNAc...) asparagine; by host glycosylation. The tract at residues 378-391 (DRGWGNGCGLFGKG) is fusion peptide. Asn-433 carries N-linked (GlcNAc...) asparagine; by host glycosylation. Cystine bridges form between Cys-465–Cys-565 and Cys-582–Cys-613. A helical transmembrane segment spans residues 726–746 (VLFSGVSWTMKIGIGILLTWL). At 747-752 (GLNSRS) the chain is on the cytoplasmic side. A helical membrane pass occupies residues 753-775 (TSLSMTCIAVGMVTLYLGVMVQA). At 776-792 (DSGCVINWKGKELKCGS) the chain is on the extracellular side. Cys-779 and Cys-790 are disulfide-bonded.

In terms of assembly, homodimer. Interacts (via N-terminus) with host EXOC1 (via C-terminus); this interaction results in EXOC1 degradation through the proteasome degradation pathway. Forms heterodimers with envelope protein E in the endoplasmic reticulum and Golgi. As to quaternary structure, homodimer; in the endoplasmic reticulum and Golgi. Interacts with protein prM. Interacts with non-structural protein 1. In terms of assembly, homodimer; Homohexamer when secreted. Interacts with envelope protein E. Post-translationally, specific enzymatic cleavages in vivo yield mature proteins. Cleavages in the lumen of endoplasmic reticulum are performed by host signal peptidase, wereas cleavages in the cytoplasmic side are performed by serine protease NS3. Signal cleavage at the 2K-4B site requires a prior NS3 protease-mediated cleavage at the 4A-2K site. In terms of processing, N-glycosylated. N-glycosylated. The excreted form is glycosylated and this is required for efficient secretion of the protein from infected cells.

Its subcellular location is the virion. The protein localises to the host nucleus. It is found in the host cytoplasm. It localises to the host perinuclear region. The protein resides in the secreted. Its subcellular location is the virion membrane. The protein localises to the host endoplasmic reticulum membrane. Plays a role in virus budding by binding to the cell membrane and gathering the viral RNA into a nucleocapsid that forms the core of a mature virus particle. During virus entry, may induce genome penetration into the host cytoplasm after hemifusion induced by the surface proteins. Can migrate to the cell nucleus where it modulates host functions. Overcomes the anti-viral effects of host EXOC1 by sequestering and degrading the latter through the proteasome degradation pathway. In terms of biological role, inhibits RNA silencing by interfering with host Dicer. Its function is as follows. Prevents premature fusion activity of envelope proteins in trans-Golgi by binding to envelope protein E at pH6.0. After virion release in extracellular space, gets dissociated from E dimers. Functionally, acts as a chaperone for envelope protein E during intracellular virion assembly by masking and inactivating envelope protein E fusion peptide. prM is the only viral peptide matured by host furin in the trans-Golgi network probably to avoid catastrophic activation of the viral fusion activity in acidic Golgi compartment prior to virion release. prM-E cleavage is inefficient, and many virions are only partially matured. These uncleaved prM would play a role in immune evasion. May play a role in virus budding. Exerts cytotoxic effects by activating a mitochondrial apoptotic pathway through M ectodomain. May display a viroporin activity. In terms of biological role, binds to host cell surface receptor and mediates fusion between viral and cellular membranes. Envelope protein is synthesized in the endoplasmic reticulum in the form of heterodimer with protein prM. They play a role in virion budding in the ER, and the newly formed immature particle is covered with 60 spikes composed of heterodimer between precursor prM and envelope protein E. The virion is transported to the Golgi apparatus where the low pH causes dissociation of PrM-E heterodimers and formation of E homodimers. prM-E cleavage is inefficient, and many virions are only partially matured. These uncleaved prM would play a role in immune evasion. Its function is as follows. Involved in immune evasion, pathogenesis and viral replication. Once cleaved off the polyprotein, is targeted to three destinations: the viral replication cycle, the plasma membrane and the extracellular compartment. Essential for viral replication. Required for formation of the replication complex and recruitment of other non-structural proteins to the ER-derived membrane structures. Excreted as a hexameric lipoparticle that plays a role against host immune response. Antagonizing the complement function. Binds to the host macrophages and dendritic cells. Inhibits signal transduction originating from Toll-like receptor 3 (TLR3). Functionally, disrupts the host endothelial glycocalyx layer of host pulmonary microvascular endothelial cells, inducing degradation of sialic acid and shedding of heparan sulfate proteoglycans. NS1 induces expression of sialidases, heparanase, and activates cathepsin L, which activates heparanase via enzymatic cleavage. These effects are probably linked to the endothelial hyperpermeability observed in severe dengue disease. The chain is Genome polyprotein from Aedes aegypti (Yellowfever mosquito).